The primary structure comprises 502 residues: Ubiquilin (502 aa).

The Ubiquitin-like domain maps to 8–83 (IKVHVKSPSN…VHLVIRNQAR (76 aa)). The span at 84 to 115 (PTPAPAAATPTASSAPSSNPTPSSQPNPTNNP) shows a compositional bias: low complexity. A disordered region spans residues 84-136 (PTPAPAAATPTASSAPSSNPTPSSQPNPTNNPFAAMGGMGSPADILNNPDAMR). STI1 domains are found at residues 124–157 (SPAD…MRTI) and 161–200 (NPQF…FQEM). Polar residues predominate over residues 235-251 (SATNSLSGNPFASLRGD). Residues 235–294 (SATNSLSGNPFASLRGDQSSEPRVDRAGQENNEALPNPWASNANQATNNQSNNRSADFNS) form a disordered region. Residues 252–262 (QSSEPRVDRAG) show a composition bias toward basic and acidic residues. Residues 274–290 (ASNANQATNNQSNNRSA) are compositionally biased toward low complexity. STI1 domains lie at 289–327 (SADF…INSI) and 351–387 (NPQI…SEAF). The region spanning 455–501 (PVNPEQTYASQLEQLQSMGFSDRARNVAALTATFGDLNAAVERLLNS) is the UBA domain.

In terms of tissue distribution, expressed in the pharynx, hypodermis, intestine and head neurons. Upon ER stress, expressed predominantly in pharyngeal muscle, hypodermis and intestine.

In terms of biological role, may play a role in the ER-associated protein degradation pathway (ERAD) possibly via its interaction with ER-localized proteins ubxn-4 and cdc-48.1 and/or cdc48.2, providing a link between the polyubiquitinated ERAD substrates and the proteasome. Also plays an important role in the regulation of other protein degradation mechanisms and pathways including ubiquitin-proteasome system (UPS) and autophagy. Mediates the proteasomal targeting of misfolded or accumulated proteins for degradation by binding (via UBA domain) to their polyubiquitin chains and by interacting (via ubiquitin-like domain) with the subunits of the proteasome. Collaborates with POST (F36D4.5) in the export of ubiquitinated proteins from the nucleus to the cytoplasm. Also acts as a regulator of DNA repair by inhibiting homologous recombination repair, thereby redirecting double-strand break repair toward non-homologous end joining (NHEJ). The protein is Ubiquilin of Caenorhabditis elegans.